The chain runs to 198 residues: Pyridoxal 5'-phosphate synthase subunit PdxT (198 aa).

An L-glutamine-binding site is contributed by 49-51 (GES). The active-site Nucleophile is the cysteine 81. Residues arginine 113 and 141-142 (IR) contribute to the L-glutamine site. Residues histidine 177 and glutamate 179 each act as charge relay system in the active site.

The protein belongs to the glutaminase PdxT/SNO family. In terms of assembly, in the presence of PdxS, forms a dodecamer of heterodimers. Only shows activity in the heterodimer.

It catalyses the reaction aldehydo-D-ribose 5-phosphate + D-glyceraldehyde 3-phosphate + L-glutamine = pyridoxal 5'-phosphate + L-glutamate + phosphate + 3 H2O + H(+). The enzyme catalyses L-glutamine + H2O = L-glutamate + NH4(+). The protein operates within cofactor biosynthesis; pyridoxal 5'-phosphate biosynthesis. Functionally, catalyzes the hydrolysis of glutamine to glutamate and ammonia as part of the biosynthesis of pyridoxal 5'-phosphate. The resulting ammonia molecule is channeled to the active site of PdxS. The sequence is that of Pyridoxal 5'-phosphate synthase subunit PdxT from Mycobacterium tuberculosis (strain ATCC 25177 / H37Ra).